Reading from the N-terminus, the 188-residue chain is dCTP deaminase (188 aa).

Residues 111-116, 135-137, Q156, Y170, K179, and Q180 contribute to the dCTP site; these read KSTYAR and TLE. Catalysis depends on E137, which acts as the Proton donor/acceptor.

It belongs to the dCTP deaminase family. In terms of assembly, homotrimer.

It carries out the reaction dCTP + H2O + H(+) = dUTP + NH4(+). It functions in the pathway pyrimidine metabolism; dUMP biosynthesis; dUMP from dCTP (dUTP route): step 1/2. Functionally, catalyzes the deamination of dCTP to dUTP. This is dCTP deaminase from Rickettsia africae (strain ESF-5).